The sequence spans 340 residues: HTH-type transcriptional regulator PtxS (340 aa).

The HTH lacI-type domain occupies 12–67 (VTINQVAEAAGVSKASVSRYIGGDRQLLADATARRIERAIDQLDYRPNQMARGLKR). The segment at residues 14-33 (INQVAEAAGVSKASVSRYIG) is a DNA-binding region (H-T-H motif).

In terms of assembly, interacts with PtxR in the absence of 2-ketogluconate. Binding of the 2-ketogluconate effector to PtxS causes PtxS/PtxR complex dissociation.

With respect to regulation, 2-ketogluconate acts as a molecular effector and causes dissociation of the PtxS/PtxR complex. Its function is as follows. Negatively regulates glucose metabolism by binding directly to the promoter region of the kgu and gad operons. It also negatively regulates its own synthesis. Functionally, in addition, in pathogenic strains, PtxS modulates PtxR activity in response to 2-ketogluconate. In the presence of PtxR, which also binds to the kgu and gad promoter regions, PtxS and PtxR form a tight complex, creating a DNA-loop that prevents RNA polymerase promoter access and expression of the glucose metabolism genes. Binding of the 2-ketogluconate effector to PtxS causes PtxS/PtxR complex dissociation and leads to the dissolution of the repression DNA-loop, facilitating the entry of the RNA polymerase and enabling the transcription of the genes. Also plays an important role in the regulation of the expression of the virulence factor exotoxin A (toxA). PtxS does not bind directly to the toxA promoter but negatively regulates the production of exotoxin A by binding to PtxR and interfering with its positive regulator activity. In the presence of 2-ketogluconate, PtxS is released and PtxR can recruit RNA polymerase. In Pseudomonas aeruginosa (strain ATCC 15692 / DSM 22644 / CIP 104116 / JCM 14847 / LMG 12228 / 1C / PRS 101 / PAO1), this protein is HTH-type transcriptional regulator PtxS.